Consider the following 974-residue polypeptide: MKNITCYLLLLCMLFTTCYSLNNDLDALLKLKKSMKGEKAKDDALKDWKFSTSASAHCSFSGVKCDEDQRVIALNVTQVPLFGHLSKEIGELNMLESLTITMDNLTGELPTELSKLTSLRILNISHNLFSGNFPGNITFGMKKLEALDAYDNNFEGPLPEEIVSLMKLKYLSFAGNFFSGTIPESYSEFQKLEILRLNYNSLTGKIPKSLSKLKMLKELQLGYENAYSGGIPPELGSIKSLRYLEISNANLTGEIPPSLGNLENLDSLFLQMNNLTGTIPPELSSMRSLMSLDLSINGLSGEIPETFSKLKNLTLINFFQNKLRGSIPAFIGDLPNLETLQVWENNFSFVLPQNLGSNGKFIYFDVTKNHLTGLIPPELCKSKKLKTFIVTDNFFRGPIPNGIGPCKSLEKIRVANNYLDGPVPPGIFQLPSVQIIELGNNRFNGQLPTEISGNSLGNLALSNNLFTGRIPASMKNLRSLQTLLLDANQFLGEIPAEVFALPVLTRINISGNNLTGGIPKTVTQCSSLTAVDFSRNMLTGEVPKGMKNLKVLSIFNVSHNSISGKIPDEIRFMTSLTTLDLSYNNFTGIVPTGGQFLVFNDRSFAGNPSLCFPHQTTCSSLLYRSRKSHAKEKAVVIAIVFATAVLMVIVTLHMMRKRKRHMAKAWKLTAFQKLEFRAEEVVECLKEENIIGKGGAGIVYRGSMANGTDVAIKRLVGQGSGRNDYGFKAEIETLGRIRHRNIMRLLGYVSNKDTNLLLYEYMPNGSLGEWLHGAKGCHLSWEMRYKIAVEAAKGLCYLHHDCSPLIIHRDVKSNNILLDADFEAHVADFGLAKFLYDPGASQSMSSIAGSYGYIAPEYAYTLKVDEKSDVYSFGVVLLELIIGRKPVGEFGDGVDIVGWINKTELELYQPSDKALVSAVVDPRLNGYPLTSVIYMFNIAMMCVKEMGPARPTMREVVHMLTNPPHSTSHNLINL.

The signal sequence occupies residues 1–20; it reads MKNITCYLLLLCMLFTTCYS. Residues asparagine 75, asparagine 104, asparagine 123, and asparagine 136 are each glycosylated (N-linked (GlcNAc...) asparagine). LRR repeat units lie at residues 92–116, 117–141, 143–165, 166–188, 189–213, 238–262, 263–286, 288–309, 310–334, 335–358, 360–382, 383–406, 407–430, 431–454, 456–477, 478–501, 503–525, 527–549, 550–573, and 574–598; these read LNML…LSKL, TSLR…TFGM, KLEA…IVSL, MKLK…SYSE, FQKL…LSKL, IKSL…LGNL, ENLD…LSSM, SLMS…TFSK, LKNL…IGDL, PNLE…LGSN, KFIY…LCKS, KKLK…IGPC, KSLE…IFQL, PSVQ…ISGN, LGNL…MKNL, RSLQ…VFAL, VLTR…VTQC, SLTA…MKNL, KVLS…IRFM, and TSLT…QFLV. Residues asparagine 250 and asparagine 274 are each glycosylated (N-linked (GlcNAc...) asparagine). Residues asparagine 312 and asparagine 346 are each glycosylated (N-linked (GlcNAc...) asparagine). 2 N-linked (GlcNAc...) asparagine glycosylation sites follow: asparagine 508 and asparagine 513. 2 N-linked (GlcNAc...) asparagine glycosylation sites follow: asparagine 556 and asparagine 585. Residues 635–655 form a helical membrane-spanning segment; the sequence is VVIAIVFATAVLMVIVTLHMM. Residues 685–972 enclose the Protein kinase domain; it reads LKEENIIGKG…PPHSTSHNLI (288 aa). ATP contacts are provided by residues 691 to 699 and lysine 713; that span reads IGKGGAGIV. Residue aspartate 810 is the Proton acceptor of the active site.

It belongs to the protein kinase superfamily. Ser/Thr protein kinase family. In terms of tissue distribution, expressed in roots and shoots. Expressed in the vasculature of leaves, petioles, stems and roots.

The protein localises to the cell membrane. It carries out the reaction L-seryl-[protein] + ATP = O-phospho-L-seryl-[protein] + ADP + H(+). It catalyses the reaction L-threonyl-[protein] + ATP = O-phospho-L-threonyl-[protein] + ADP + H(+). LRR receptor kinase involved in the regulation of root growth and root nodule organogenesis. Involved in long distance nodulation signaling events. Involved in the autoregulation of nodulation (AON), a long distance systemic signaling from root to shoot and back again, which allows legumes to limit the number of root nodules formed based on available nitrogen and previous rhizobial colonization. Acts from shoot to root to control AON. Interacts with CLE12 and CLE13 signaling to control nodule numbers. Required for the modulation of shoot-to-root auxin transport in response to altered nitrogen tissue concentrations and in the absence of rhizobia. Shoot-to-root auxin transport influences lateral root density and length. Involved in the regulation of root colonization by arbuscular mycorrhizal (AM) fungi. Interacts with CLE33 and CL53 signaling to repress strigolactone biosynthetic genes and strigolactone content in the roots, and consequently reduces the promotion of further colonization by AM fungi. The sequence is that of Leucine-rich repeat receptor-like kinase protein SUNN from Medicago truncatula (Barrel medic).